The following is a 517-amino-acid chain: Bifunctional purine biosynthesis protein PurH (517 aa).

Positions Met1–Val145 constitute an MGS-like domain.

The protein belongs to the PurH family.

The catalysed reaction is (6R)-10-formyltetrahydrofolate + 5-amino-1-(5-phospho-beta-D-ribosyl)imidazole-4-carboxamide = 5-formamido-1-(5-phospho-D-ribosyl)imidazole-4-carboxamide + (6S)-5,6,7,8-tetrahydrofolate. The enzyme catalyses IMP + H2O = 5-formamido-1-(5-phospho-D-ribosyl)imidazole-4-carboxamide. The protein operates within purine metabolism; IMP biosynthesis via de novo pathway; 5-formamido-1-(5-phospho-D-ribosyl)imidazole-4-carboxamide from 5-amino-1-(5-phospho-D-ribosyl)imidazole-4-carboxamide (10-formyl THF route): step 1/1. It functions in the pathway purine metabolism; IMP biosynthesis via de novo pathway; IMP from 5-formamido-1-(5-phospho-D-ribosyl)imidazole-4-carboxamide: step 1/1. The chain is Bifunctional purine biosynthesis protein PurH from Prochlorococcus marinus (strain AS9601).